We begin with the raw amino-acid sequence, 217 residues long: Cytidylate kinase (217 aa).

Residue 10–18 (GPAGAGKST) coordinates ATP.

It belongs to the cytidylate kinase family. Type 1 subfamily.

Its subcellular location is the cytoplasm. It carries out the reaction CMP + ATP = CDP + ADP. The catalysed reaction is dCMP + ATP = dCDP + ADP. This is Cytidylate kinase from Clostridium botulinum (strain Langeland / NCTC 10281 / Type F).